The following is a 29-amino-acid chain: Dermaseptin-J8 (29 aa).

Expressed by the skin glands.

Its subcellular location is the secreted. Has antimicrobial activity. In Phasmahyla jandaia (Jandaia leaf frog), this protein is Dermaseptin-J8.